A 220-amino-acid chain; its full sequence is Pyridoxine/pyridoxamine 5'-phosphate oxidase (220 aa).

FMN contacts are provided by residues 69 to 74 (RVVLLK), 84 to 85 (YT), R90, K91, and Q113. K74 is a substrate binding site. Substrate contacts are provided by Y131, R135, and S139. FMN is bound by residues 148–149 (QS) and W193. Substrate is bound at residue 199–201 (RLH). FMN is bound at residue R203.

The protein belongs to the pyridoxamine 5'-phosphate oxidase family. In terms of assembly, homodimer. The cofactor is FMN.

It catalyses the reaction pyridoxamine 5'-phosphate + O2 + H2O = pyridoxal 5'-phosphate + H2O2 + NH4(+). The enzyme catalyses pyridoxine 5'-phosphate + O2 = pyridoxal 5'-phosphate + H2O2. The protein operates within cofactor metabolism; pyridoxal 5'-phosphate salvage; pyridoxal 5'-phosphate from pyridoxamine 5'-phosphate: step 1/1. It participates in cofactor metabolism; pyridoxal 5'-phosphate salvage; pyridoxal 5'-phosphate from pyridoxine 5'-phosphate: step 1/1. Its function is as follows. Catalyzes the oxidation of either pyridoxine 5'-phosphate (PNP) or pyridoxamine 5'-phosphate (PMP) into pyridoxal 5'-phosphate (PLP). The chain is Pyridoxine/pyridoxamine 5'-phosphate oxidase from Myxococcus xanthus.